The chain runs to 79 residues: Small ribosomal subunit protein bS18 (79 aa).

It belongs to the bacterial ribosomal protein bS18 family. As to quaternary structure, part of the 30S ribosomal subunit. Forms a tight heterodimer with protein bS6.

Its function is as follows. Binds as a heterodimer with protein bS6 to the central domain of the 16S rRNA, where it helps stabilize the platform of the 30S subunit. This is Small ribosomal subunit protein bS18 from Blochmanniella pennsylvanica (strain BPEN).